A 217-amino-acid polypeptide reads, in one-letter code: Response regulator RR06 (217 aa).

Residues 2 to 115 form the Response regulatory domain; sequence NILVADDEEM…LLVKRIKALI (114 aa). At Asp-51 the chain carries 4-aspartylphosphate. The ompR/PhoB-type DNA-binding region spans 122 to 217; the sequence is EDIWRYQDVT…VKNVGYKISL (96 aa).

In terms of processing, phosphorylated at threonine residues by StkP; threonine phosphorylation enhances RR06 binding to DNA and may also increase expression of CbpA. May be de-phosphorylated by PhpP.

Functionally, member of the two-component regulatory system HK06/RR06 involved in regulation of target genes, including choline-binding protein CbpA. Binds to the promoter region of CbpA and directly activates transcription. The protein is Response regulator RR06 of Streptococcus pneumoniae serotype 2 (strain D39 / NCTC 7466).